The following is a 431-amino-acid chain: tRNA-2-methylthio-N(6)-dimethylallyladenosine synthase (431 aa).

Positions Arg-4–Ser-120 constitute an MTTase N-terminal domain. The [4Fe-4S] cluster site is built by Cys-13, Cys-49, Cys-83, Cys-154, Cys-158, and Cys-161. Positions Arg-140–Arg-367 constitute a Radical SAM core domain. A TRAM domain is found at Lys-370 to Ser-430.

It belongs to the methylthiotransferase family. MiaB subfamily. Monomer. Requires [4Fe-4S] cluster as cofactor.

The protein localises to the cytoplasm. It carries out the reaction N(6)-dimethylallyladenosine(37) in tRNA + (sulfur carrier)-SH + AH2 + 2 S-adenosyl-L-methionine = 2-methylsulfanyl-N(6)-dimethylallyladenosine(37) in tRNA + (sulfur carrier)-H + 5'-deoxyadenosine + L-methionine + A + S-adenosyl-L-homocysteine + 2 H(+). Functionally, catalyzes the methylthiolation of N6-(dimethylallyl)adenosine (i(6)A), leading to the formation of 2-methylthio-N6-(dimethylallyl)adenosine (ms(2)i(6)A) at position 37 in tRNAs that read codons beginning with uridine. This is tRNA-2-methylthio-N(6)-dimethylallyladenosine synthase from Thermodesulfovibrio yellowstonii (strain ATCC 51303 / DSM 11347 / YP87).